The primary structure comprises 692 residues: MYLSIIILPLLGSIVSGFFGRKVGVTGSRILGCLSIITTTILAIISFFEVGFNNNPISINLFKWLDSESFNMVWNFQFDSLTVSMLIPVLVISSLVHFYSIGYMSHDPHSQRFFSYLSLFTFMMIILVTGNNYLLMFVGWEGVGVCSYLLVSFWFTRIAANQSSLSAFLTNRVGDCFLTIGMFVILWSLGNLDYSTVFSLAPYINENIITIIGICLLIGAMAKSSQVGLHIWLPMAMEGPTPVSALIHAATMVTAGVYLLIRSSPLIEYSSTVLLICLWLGAVTTVFSSLIGLFQQDIKKIIAYSTMSQLGMMVIAIGLSSYNVAIFHLINHAFYKGLLFLGAGAVIHAVVDNQDLRKYGGLISFLPLTYTVILIASLSLVAFPFMTGFFSKDFILESAYGQYHFSSINVYFIATIGAVFTTLYSVKVIYLTFLANPNGSVNYYKNAHEGDIFLSLPLVILAIFSIYFGYLTKDIYIGLGSGFFIDNSIFIHPMREILIDTEFGVPTIFKLLPFFLTIFFSVLSIVYYEYMPKVVVDFNLTNLGYYIYGFFNQRFLVEFFYNKYIVNTVLDLGGQTTKILDKGSVEWIGPYGFGIALVKASKTVSGLGKGVVTDYALYILIGACFYLSIFTFISIFFDLANSITLSCVLVLLGVNNYVKLNKNDNINENSLTSSFLWSNTKEMSKYTTKIII.

17 helical membrane-spanning segments follow: residues 5-23 (IIILPLLGSIVSGFFGRKV), 30-52 (ILGCLSIITTTILAIISFFEVGF), 81-103 (LTVSMLIPVLVISSLVHFYSIGY), 112-129 (RFFSYLSLFTFMMIILVT), 133-155 (YLLMFVGWEGVGVCSYLLVSFWF), 168-190 (FLTNRVGDCFLTIGMFVILWSLG), 200-222 (LAPYINENIITIIGICLLIGAMA), 243-262 (VSALIHAATMVTAGVYLLIR), 272-294 (TVLLICLWLGAVTTVFSSLIGLF), 301-319 (IIAYSTMSQLGMMVIAIGL), 329-351 (LINHAFYKGLLFLGAGAVIHAVV), 364-386 (SFLPLTYTVILIASLSLVAFPFM), 409-431 (NVYFIATIGAVFTTLYSVKVIYL), 452-471 (IFLSLPLVILAIFSIYFGYL), 511-528 (LLPFFLTIFFSVLSIVYY), 535-557 (VVDFNLTNLGYYIYGFFNQRFLV), and 615-637 (YALYILIGACFYLSIFTFISIFF).

It belongs to the complex I subunit 5 family.

It is found in the mitochondrion inner membrane. It carries out the reaction a ubiquinone + NADH + 5 H(+)(in) = a ubiquinol + NAD(+) + 4 H(+)(out). Functionally, core subunit of the mitochondrial membrane respiratory chain NADH dehydrogenase (Complex I) that is believed to belong to the minimal assembly required for catalysis. Complex I functions in the transfer of electrons from NADH to the respiratory chain. The immediate electron acceptor for the enzyme is believed to be ubiquinone. The protein is NADH-ubiquinone oxidoreductase chain 5 (nd5) of Hypocrea jecorina (Trichoderma reesei).